The chain runs to 141 residues: Hemoglobin subunit alpha (141 aa).

Residues 1–141 (VLSPADKKNV…VSTVLTSKYR (141 aa)) enclose the Globin domain. A Phosphoserine modification is found at serine 3. 2 positions are modified to N6-succinyllysine: lysine 7 and lysine 11. At lysine 16 the chain carries N6-acetyllysine; alternate. Lysine 16 carries the post-translational modification N6-succinyllysine; alternate. Phosphotyrosine is present on tyrosine 24. A Phosphoserine modification is found at serine 35. Lysine 40 carries the N6-succinyllysine modification. Serine 49 is modified (phosphoserine). Residue histidine 58 coordinates O2. Histidine 87 contacts heme b. Phosphoserine is present on serine 102. A Phosphothreonine modification is found at threonine 108. Residues serine 124 and serine 131 each carry the phosphoserine modification. 2 positions are modified to phosphothreonine: threonine 134 and threonine 137. Serine 138 bears the Phosphoserine mark.

It belongs to the globin family. In terms of assembly, heterotetramer of two alpha chains and two beta chains. In terms of tissue distribution, red blood cells.

Its function is as follows. Involved in oxygen transport from the lung to the various peripheral tissues. Functionally, hemopressin acts as an antagonist peptide of the cannabinoid receptor CNR1. Hemopressin-binding efficiently blocks cannabinoid receptor CNR1 and subsequent signaling. This Spermophilus citellus (European ground squirrel) protein is Hemoglobin subunit alpha (HBA).